The chain runs to 708 residues: Leucine-rich repeat neuronal protein 3 (708 aa).

The signal sequence occupies residues 1–22 (MKDMPLRIHVLLGLAITTLVQA). The 47-residue stretch at 23–69 (VDKKVDCPRLCTCEIRPWFTPRSIYMEASTVDCNDLGLLTFPARLPA) folds into the LRRNT domain. The Extracellular segment spans residues 23–628 (VDKKVDCPRL…KEYEKNNTTT (606 aa)). LRR repeat units follow at residues 70–91 (NTQI…TDFP), 93–114 (NLTG…NVKK), 117–138 (QLLS…CLSE), 141–162 (NLQE…AFIG), 165–186 (NLLR…WFDA), 189–210 (NLEI…NFKP), 213–234 (NLRS…ALVG), 237–258 (NLES…ALQK), 261–282 (NLKF…DFSN), 285–304 (HLKE…DSLA), 310–332 (DLRK…AFFR), and 335–358 (KLES…ESLP). Residues Asn93 and Asn103 are each glycosylated (N-linked (GlcNAc...) asparagine). The N-linked (GlcNAc...) asparagine glycan is linked to Asn223. Residues 368 to 421 (NPIRCDCVIRWMNMNKTNIRFMEPDSLFCVDPPEFQGQNVRQVHFRDMMEICLP) enclose the LRRCT domain. A glycan (N-linked (GlcNAc...) asparagine) is linked at Asn382. One can recognise an Ig-like C2-type domain in the interval 421-514 (PLIAPESFPS…DLKSVMIKVD (94 aa)). The cysteines at positions 444 and 496 are disulfide-linked. Asn522, Asn579, Asn608, Asn624, and Asn625 each carry an N-linked (GlcNAc...) asparagine glycan. In terms of domain architecture, Fibronectin type-III spans 523-617 (GSLNIKIRDI…NVTTKGLHPD (95 aa)). Residues 629 to 649 (LMACLGGLLGIIGVICLISCL) form a helical membrane-spanning segment. The Cytoplasmic segment spans residues 650 to 708 (SPEMNCDGGHSYVRNYLQKPTFALGELYPPLINLWEAGKEKSTSLKVKATVIGLPTNMS).

The protein localises to the membrane. In Homo sapiens (Human), this protein is Leucine-rich repeat neuronal protein 3 (LRRN3).